The chain runs to 361 residues: Phosphoserine aminotransferase (361 aa).

Residue arginine 43 coordinates L-glutamate. Residues 77-78 (AS), tryptophan 103, threonine 152, aspartate 172, and glutamine 195 contribute to the pyridoxal 5'-phosphate site. Lysine 196 bears the N6-(pyridoxal phosphate)lysine mark. Position 237–238 (237–238 (NT)) interacts with pyridoxal 5'-phosphate.

This sequence belongs to the class-V pyridoxal-phosphate-dependent aminotransferase family. SerC subfamily. Homodimer. It depends on pyridoxal 5'-phosphate as a cofactor.

The protein resides in the cytoplasm. The catalysed reaction is O-phospho-L-serine + 2-oxoglutarate = 3-phosphooxypyruvate + L-glutamate. The enzyme catalyses 4-(phosphooxy)-L-threonine + 2-oxoglutarate = (R)-3-hydroxy-2-oxo-4-phosphooxybutanoate + L-glutamate. Its pathway is amino-acid biosynthesis; L-serine biosynthesis; L-serine from 3-phospho-D-glycerate: step 2/3. The protein operates within cofactor biosynthesis; pyridoxine 5'-phosphate biosynthesis; pyridoxine 5'-phosphate from D-erythrose 4-phosphate: step 3/5. Functionally, catalyzes the reversible conversion of 3-phosphohydroxypyruvate to phosphoserine and of 3-hydroxy-2-oxo-4-phosphonooxybutanoate to phosphohydroxythreonine. This chain is Phosphoserine aminotransferase, found in Desulfosudis oleivorans (strain DSM 6200 / JCM 39069 / Hxd3) (Desulfococcus oleovorans).